A 1009-amino-acid chain; its full sequence is MICAL-like protein 2 (1009 aa).

The 107-residue stretch at 1-107 (MAAIKALQEW…YVSQYYNYFH (107 aa)) folds into the Calponin-homology (CH) domain. Residues 1 to 260 (MAAIKALQEW…KSSNLASRKP (260 aa)) are forms an intramolecular interaction with the C-terminal coiled coil domain keeping the protein in a closed conformation. Phosphoserine is present on residues S110, S143, and S153. Disordered regions lie at residues 114–180 (GMAG…PGTA), 247–268 (SVSP…ADTR), 348–447 (NSSP…TSKV), and 655–834 (SPSI…TSPV). Residues 144 to 171 (PAQTQRSPLSPARTNPVVQRNEGGSQRP) are compositionally biased toward polar residues. In terms of domain architecture, LIM zinc-binding spans 186–248 (SICGVCGKHV…THHSSEVTSV (63 aa)). Residue S249 is modified to Phosphoserine. The tract at residues 261-393 (GGVTADTRPF…QGQTASKGVK (133 aa)) is necessary and sufficient for interaction with actinins. The segment at 261–805 (GGVTADTRPF…EDGTRSCKEE (545 aa)) is mediates targeting to the cell plasma membrane. Over residues 348–419 (NSSPIGWSSP…AWTSSASKTQ (72 aa)) the composition is skewed to polar residues. The span at 430 to 442 (PSAPAPASAPAPA) shows a compositional bias: pro residues. A compositionally biased stretch (basic and acidic residues) spans 694-730 (EGWRARLKPVDKKTPAGRSLEQKEPVLAEPRIGDTSR). Composition is skewed to low complexity over residues 731 to 746 (KASS…TLTS) and 755 to 769 (PAGS…SPSP). A phosphoserine mark is found at S766 and S768. Positions 791–817 (EPKKQEDGTRSCKEEKSPTRWSRERSA) are enriched in basic and acidic residues. The tract at residues 806-913 (KSPTRWSRER…LMYKSKDQRL (108 aa)) is forms an intramolecular interaction with the N-terminal Calponin-homology and LIM zinc-binding domains-containing region keeping the protein in a closed conformation. The residue at position 832 (S832) is a Phosphoserine. One can recognise a bMERB domain in the interval 833 to 980 (PVRLHPDYIP…EQEEDQMLEN (148 aa)). A coiled-coil region spans residues 841–880 (IPQEELQRQLQDIESQLDALELRGVELEKRLRAAEGDASE). Positions 913 to 1009 (LEEQQLDLQG…WSSKSKSGQA (97 aa)) are mediates interaction with RAB13 and is required for transition from the closed to the open conformation.

As to quaternary structure, interacts with RAB13 (GTP-bound form); competes with RAB8A and is involved in tight junctions assembly. Interacts with RAB8A; competes with RAB13 and is involved in E-cadherin endocytic recycling. Interacts with RAB8B. Interacts (preferentially in opened conformation) with ACTN1 and ACTN4; stimulated by RAB13 activation. Interacts (via calponin-homology (CH) domain) with the filamins FLNA, FLNB and FLNC (via actin-binding domain). Detected in brain, lung, liver and kidney (at protein level).

The protein localises to the cell membrane. Its subcellular location is the cell junction. It is found in the tight junction. It localises to the recycling endosome. The protein resides in the cell projection. The protein localises to the neuron projection. Its subcellular location is the cytoplasm. It is found in the cytoskeleton. Functionally, effector of small Rab GTPases RAB8A and RAB13 which is involved in junctional complexes assembly through the regulation of cell adhesion molecules transport to the plasma membrane and actin cytoskeleton reorganization. Regulates the endocytic recycling of occludins, claudins and E-cadherin to the plasma membrane and may thereby regulate the establishment of tight junctions and adherens junctions. In parallel, may regulate actin cytoskeleton reorganization directly through interaction with F-actin or indirectly through actinins and filamins. Undergoes liquid-liquid phase separation to form tubular recycling endosomes. Plays 2 sequential roles in the biogenesis of tubular recycling endosomes: first organizes phase separation and then the closed form formed by interaction with RAB8A promotes endosomal tubulation. The sequence is that of MICAL-like protein 2 (Micall2) from Mus musculus (Mouse).